A 166-amino-acid polypeptide reads, in one-letter code: RNA polymerase sigma factor SigV (166 aa).

A Polymerase core binding motif is present at residues 38–51; the sequence is DIVQESIKKALSSV. Residues 131–150 constitute a DNA-binding region (H-T-H motif); the sequence is LEEIAEITGENTNTVKTRLY.

It belongs to the sigma-70 factor family. ECF subfamily. In terms of assembly, interacts with RsiV.

Its function is as follows. Sigma factors are initiation factors that promote the attachment of RNA polymerase to specific initiation sites and are then released. Positively regulates the expression of proteins involved in stress responses against bacitracin, paraquat and tellurite. The protein is RNA polymerase sigma factor SigV (sigV) of Bacillus subtilis (strain 168).